Reading from the N-terminus, the 93-residue chain is Conotoxin Mr105 (93 aa).

The N-terminal stretch at 1-22 is a signal peptide; sequence MQRGAVLLGVVALLVLWPQAGA. A propeptide spanning residues 23-33 is cleaved from the precursor; it reads ELYDVNDPDVR.

Belongs to the F superfamily. In terms of processing, contains 4 disulfide bonds. In terms of tissue distribution, expressed by the venom duct.

Its subcellular location is the secreted. This Conus marmoreus (Marble cone) protein is Conotoxin Mr105.